Here is a 914-residue protein sequence, read N- to C-terminus: MEGPEIKAVEAVIDNGSFGKRTLRFETGRLAQQADGAVAAYLDDDSMILSTTTAGSSPKENYDFFPLTVDVEEKMYAAGKIPGSFFRREGRPSSEAILACRIIDRPLRPLFPHTLRNEVQVVETVLAVNPDDAYDVIALNAASASTMISGLPFEGPVSGVRLALIDGQWVAFPRWSERERAVFEIVVAGRVVENGDVAIAMIEAGAGKNAWHLIYDEGQTKPDEEVVAGGLEAAKPFIKVICEAQDELKKIAAKETKEFQLFPEYTDELYARIDEIAHKDLDEALSIAEKLPRQDRIHEIKEHVREVLADEFTDMDDAEKDKELGNAFKELQRQIVRRRILTEDYRIDGRGLRDIRTLSAEVDIVPRVHGSALFQRGETQILGVTTLNMLKMEQQIDALSGPQSKRYMHNYEMPPYSTGETGRVGSPKRREIGHGALAEKALVPVLPSREEFPYAIRQVSEAIGSNGSTSMGSVCASTLSLLAAGVPLKAPVAGIAMGLVSGDVDGQHIFKTLTDILGAEDAFGDMDFKVAGTSEFITALQLDTKLDGIPADILAAALQQAKEARATILEVINECIDGPAEMSEFAPRIITTSVPVEKIGEVIGPKGKMINQIQEDTGAEIAIEDDGTVFISSEGGEAAKKAKSIIDSIANPHVPEAGETYNGKVVKTTSFGAFVNLTPGTDGLLHISQIRNLANGERIDAVEDVLREGDTVEVIVQGVDDRGKISLAIPGFEDQENNARPSRGDRDDRRGGRGRGDRDDRRGGRGRRSDRDDRDFDDRDDRPRRRRSDDFEDDYDDRPRRRRSDDRDFDRDDRDDDRPRRRRSADRDFDDRDDRDARDSRDDDRPRRRRSADRDDRGDRDDRRGGFRGGRGRGSDRNPRYATDDNYDDYRADREERTERPRRRVRRDFDPFED.

The disordered stretch occupies residues 407 to 427 (YMHNYEMPPYSTGETGRVGSP). Aspartate 521 and aspartate 527 together coordinate Mg(2+). One can recognise a KH domain in the interval 587–646 (PRIITTSVPVEKIGEVIGPKGKMINQIQEDTGAEIAIEDDGTVFISSEGGEAAKKAKSII). The S1 motif domain occupies 658 to 730 (GETYNGKVVK…DRGKISLAIP (73 aa)). The disordered stretch occupies residues 727-914 (LAIPGFEDQE…VRRDFDPFED (188 aa)). Composition is skewed to basic and acidic residues over residues 742–789 (SRGD…RRSD), 797–865 (DRPR…DRRG), and 873–899 (RGSD…ERTE).

Belongs to the polyribonucleotide nucleotidyltransferase family. Mg(2+) serves as cofactor.

The protein resides in the cytoplasm. It catalyses the reaction RNA(n+1) + phosphate = RNA(n) + a ribonucleoside 5'-diphosphate. Its function is as follows. Involved in mRNA degradation. Catalyzes the phosphorolysis of single-stranded polyribonucleotides processively in the 3'- to 5'-direction. This is Polyribonucleotide nucleotidyltransferase from Bifidobacterium longum subsp. infantis (strain ATCC 15697 / DSM 20088 / JCM 1222 / NCTC 11817 / S12).